We begin with the raw amino-acid sequence, 289 residues long: Type II methyltransferase M.MjaIII (289 aa).

Trp-9, Lys-13, Asp-63, and Asp-199 together coordinate S-adenosyl-L-methionine.

Belongs to the N(4)/N(6)-methyltransferase family.

The enzyme catalyses a 2'-deoxyadenosine in DNA + S-adenosyl-L-methionine = an N(6)-methyl-2'-deoxyadenosine in DNA + S-adenosyl-L-homocysteine + H(+). An alpha subtype methylase that recognizes the double-stranded sequence 5'-GATC-3', methylates A-2 on both strands, and protects the DNA from cleavage by the MjaIII endonuclease. The protein is Type II methyltransferase M.MjaIII (mjaIIIM) of Methanocaldococcus jannaschii (strain ATCC 43067 / DSM 2661 / JAL-1 / JCM 10045 / NBRC 100440) (Methanococcus jannaschii).